A 201-amino-acid polypeptide reads, in one-letter code: Glycerol-3-phosphate acyltransferase (201 aa).

The next 5 membrane-spanning stretches (helical) occupy residues 10–30 (MLIG…GLIL), 60–80 (LAAA…LIAA), 86–106 (AAIA…WIGF), 116–136 (LGVL…AWIV), and 166–186 (ALAA…RANI).

The protein belongs to the PlsY family. Probably interacts with PlsX.

It is found in the cell inner membrane. The catalysed reaction is an acyl phosphate + sn-glycerol 3-phosphate = a 1-acyl-sn-glycero-3-phosphate + phosphate. It functions in the pathway lipid metabolism; phospholipid metabolism. In terms of biological role, catalyzes the transfer of an acyl group from acyl-phosphate (acyl-PO(4)) to glycerol-3-phosphate (G3P) to form lysophosphatidic acid (LPA). This enzyme utilizes acyl-phosphate as fatty acyl donor, but not acyl-CoA or acyl-ACP. This chain is Glycerol-3-phosphate acyltransferase, found in Brucella melitensis biotype 2 (strain ATCC 23457).